The chain runs to 549 residues: Speedy protein E3 (549 aa).

A compositionally biased stretch (low complexity) spans 1 to 15 (MTSHQPQPQEEQSPQ). Disordered stretches follow at residues 1–74 (MTSH…EPEE), 126–145 (KRECLDESDDEPEKELAPEP), 188–218 (SPPRRSLGCKRKRECLDESDDEPEKELAPEP), 261–291 (SPPRRSLGCKRKRECLDESDDEPEKELAPEP), and 334–364 (SPPRRSLGCKRKRECLDESDDEPEKELAPEP). 5 stretches are compositionally biased toward acidic residues: residues 58 to 74 (DESDDEPEKELAPEPEE), 131 to 145 (DESDDEPEKELAPEP), 204 to 218 (DESDDEPEKELAPEP), 277 to 291 (DESDDEPEKELAPEP), and 350 to 364 (DESDDEPEKELAPEP).

The protein belongs to the Speedy/Ringo family. In terms of tissue distribution, predominantly expressed in testis and spleen.

The sequence is that of Speedy protein E3 from Homo sapiens (Human).